We begin with the raw amino-acid sequence, 701 residues long: DNA ligase (701 aa).

NAD(+) contacts are provided by residues 50-54, 99-100, and Glu130; these read DYEYD and SL. Lys132 acts as the N6-AMP-lysine intermediate in catalysis. Residues Arg153, Glu187, Lys301, and Lys325 each coordinate NAD(+). Zn(2+)-binding residues include Cys419, Cys422, Cys437, and Cys442. The BRCT domain occupies 626 to 701; that stretch reads NEHQKYMNKT…EIITEPFWDN (76 aa).

Belongs to the NAD-dependent DNA ligase family. LigA subfamily. Requires Mg(2+) as cofactor. It depends on Mn(2+) as a cofactor.

The catalysed reaction is NAD(+) + (deoxyribonucleotide)n-3'-hydroxyl + 5'-phospho-(deoxyribonucleotide)m = (deoxyribonucleotide)n+m + AMP + beta-nicotinamide D-nucleotide.. DNA ligase that catalyzes the formation of phosphodiester linkages between 5'-phosphoryl and 3'-hydroxyl groups in double-stranded DNA using NAD as a coenzyme and as the energy source for the reaction. It is essential for DNA replication and repair of damaged DNA. The chain is DNA ligase from Malacoplasma penetrans (strain HF-2) (Mycoplasma penetrans).